The chain runs to 100 residues: Small ribosomal subunit protein uS14c (100 aa).

The protein belongs to the universal ribosomal protein uS14 family. Component of the chloroplast small ribosomal subunit (SSU). Mature 70S chloroplast ribosomes of higher plants consist of a small (30S) and a large (50S) subunit. The 30S small subunit contains 1 molecule of ribosomal RNA (16S rRNA) and 24 different proteins. The 50S large subunit contains 3 rRNA molecules (23S, 5S and 4.5S rRNA) and 33 different proteins.

The protein resides in the plastid. Its subcellular location is the chloroplast. Component of the chloroplast ribosome (chloro-ribosome), a dedicated translation machinery responsible for the synthesis of chloroplast genome-encoded proteins, including proteins of the transcription and translation machinery and components of the photosynthetic apparatus. The sequence is that of Small ribosomal subunit protein uS14c from Spinacia oleracea (Spinach).